The chain runs to 365 residues: Testis-specific serine/threonine-protein kinase 1 (365 aa).

One can recognise a Protein kinase domain in the interval 12-272 (YIMGINLGEG…IDEILNHCWV (261 aa)). ATP-binding positions include 18-26 (LGEGSYAKV) and Lys-41. Asp-136 acts as the Proton acceptor in catalysis. Phosphothreonine is present on Thr-174. The disordered stretch occupies residues 282–365 (GAINKEGESS…HPQQPSETHT (84 aa)). Positions 303 to 330 (GADKKSATKLEPREEARSEARSESKPQE) are enriched in basic and acidic residues. Polar residues predominate over residues 331-347 (DTLQVVRQSENVGLSSE).

It belongs to the protein kinase superfamily. CAMK Ser/Thr protein kinase family. As to quaternary structure, interacts with TSSK2. Interacts with HSP90; this interaction stabilizes TSSK1. The cofactor is Mg(2+). Post-translationally, autophosphorylated. In terms of processing, ubiquitinated; HSP90 activity negatively regulates ubiquitination and degradation. Testis-specific. Expressed only in postmeiotic spermatids at the final stages of cytodifferentiation in the seminiferous tubules (at protein level). Not detected in released sperms in the lumen of the seminiferous tubules and the epididymis.

The protein localises to the cytoplasm. Its subcellular location is the cytoplasmic vesicle. The protein resides in the secretory vesicle. It is found in the acrosome. It localises to the cell projection. The protein localises to the cilium. Its subcellular location is the flagellum. It carries out the reaction L-seryl-[protein] + ATP = O-phospho-L-seryl-[protein] + ADP + H(+). The catalysed reaction is L-threonyl-[protein] + ATP = O-phospho-L-threonyl-[protein] + ADP + H(+). Activated by phosphorylation on Thr-174, potentially by autophosphorylation. Functionally, testis-specific serine/threonine-protein kinase required during spermatid development. Phosphorylates 'Ser-281' of TSKS. Involved in the late stages of spermatogenesis, during the reconstruction of the cytoplasm. During spermatogenesis, required for the transformation of a ring-shaped structure around the base of the flagellum originating from the chromatoid body. In Mus musculus (Mouse), this protein is Testis-specific serine/threonine-protein kinase 1 (Tssk1b).